Consider the following 384-residue polypeptide: Glucans biosynthesis protein C (384 aa).

The next 10 helical transmembrane spans lie at 17 to 37, 54 to 74, 91 to 111, 140 to 160, 173 to 193, 212 to 232, 240 to 260, 274 to 294, 311 to 331, and 338 to 358; these read AWLM…THSW, FIHA…SYML, VGIP…ILLQ, LWFL…FTWF, AISL…YAAI, FIVM…LAFI, FTTP…AYLL, TESV…FSLG, ASLF…AYIT, and LIGF…LYEI.

This sequence belongs to the acyltransferase 3 family. OpgC subfamily.

Its subcellular location is the cell membrane. The protein operates within glycan metabolism; osmoregulated periplasmic glucan (OPG) biosynthesis. Functionally, necessary for the succinyl substitution of periplasmic glucans. Could catalyze the transfer of succinyl residues from the cytoplasmic side of the membrane to the nascent glucan backbones on the periplasmic side of the membrane. In Salmonella schwarzengrund (strain CVM19633), this protein is Glucans biosynthesis protein C.